Consider the following 404-residue polypeptide: Phosphopentomutase (404 aa).

Residues Asp-10, Asp-303, His-308, Asp-344, His-345, and His-356 each coordinate Mn(2+).

Belongs to the phosphopentomutase family. Mn(2+) is required as a cofactor.

It localises to the cytoplasm. It catalyses the reaction 2-deoxy-alpha-D-ribose 1-phosphate = 2-deoxy-D-ribose 5-phosphate. The catalysed reaction is alpha-D-ribose 1-phosphate = D-ribose 5-phosphate. It participates in carbohydrate degradation; 2-deoxy-D-ribose 1-phosphate degradation; D-glyceraldehyde 3-phosphate and acetaldehyde from 2-deoxy-alpha-D-ribose 1-phosphate: step 1/2. Its function is as follows. Isomerase that catalyzes the conversion of deoxy-ribose 1-phosphate (dRib-1-P) and ribose 1-phosphate (Rib-1-P) to deoxy-ribose 5-phosphate (dRib-5-P) and ribose 5-phosphate (Rib-5-P), respectively. The polypeptide is Phosphopentomutase (Shewanella sp. (strain MR-4)).